Reading from the N-terminus, the 273-residue chain is MRLASRFGRYNSIHRERPLTDDELMQFVPSVFSGDKHESRSERYTYIPTINIINKLRDEGFQPFFACQSRVRDLGRREYSKHMLRLRREGHINGQEVPEIILLNSHDGSSSYQMIPGIFRFVCTNGLVCGNNFGEIRVPHKGDIVGQVIEGAYEVLGVFDKVTDNMEAMKEIHLNSDEQHLFGRAALMVRYEDENKTPVTPEQIITPRRWEDKQNDLWTTWQRVQENMIKGGLSGRSASGKNTRTRAITGIDGDIRINKALWVIAEQFRKWKS.

This sequence belongs to the UPF0380 family.

This Escherichia coli (strain K12) protein is UPF0380 protein YubP (yubP).